Here is a 263-residue protein sequence, read N- to C-terminus: MNSSRRQEGSPLDLNNLPDEFGKQTVESSTTTAASSAEASRVTKKKSNGGKDEAGKVYECRFCSLKFCKSQALGGHMNRHRQERETETLNRARQLVFGNDSLAAVGAQLNFRDVNMGGGGAAAPPPTMQMGGGGFRGGGVGGDPCIPLRPVQPRLSPPQPPPYHHYLYTTTAPPSALHPMSYPATYPAPPRHQQPAAVGDYVIGHAVSAGDALVAPPPPPHRASFSCFGAPLAAPPANVQPDNGNCNCSFGCGHSNRNVNAAS.

A disordered region spans residues Met-1–Lys-51. The segment covering Thr-25–Ser-40 has biased composition (low complexity). The segment at Tyr-58–His-80 adopts a C2H2-type zinc-finger fold.

Expressed in leaf primordia, inflorescence meristem, rachis branch meristems, floral meristem and floral organ primordia.

It localises to the nucleus. In terms of biological role, regulates floral organ identity and cell proliferation in the inner floral whorls. Probably specifies the identities of lodicule and stamen through positive regulation of MADS16 expression. May contribute to morphogenesis by suppressing OSH1 expression in the lateral organs. The polypeptide is Zinc finger protein STAMENLESS 1 (SL1) (Oryza sativa subsp. japonica (Rice)).